The chain runs to 1720 residues: DNA-directed RNA polymerase I subunit RPA1 (1720 aa).

The Zn(2+) site is built by Cys64, Cys67, Cys74, His77, Cys104, and Cys107. Residues 110–201 (LTCPRAVIHL…IALFWKAHMN (92 aa)) are clamp. Residues Cys205 and Cys208 each contribute to the Zn(2+) site. At Ser240 the chain carries Phosphoserine. The interval 320–426 (FTNGQTVNLQ…IRQILEKKEG (107 aa)) is clamp. The interval 403-416 (DSEMDKLMMDKYPG) is rudder. DNA contacts are provided by Lys424, Arg429, and Arg436. The interval 468 to 542 (YPQPVTPWNV…QGTKIVCRHV (75 aa)) is involved in RRN3 binding to Pol I complex. Arg552 is a binding site for RNA. Residues Asp588, Asp590, and Asp592 each contribute to the Mg(2+) site. Asp592 provides a ligand contact to RNA. Residues 805–883 (KPKADVKRQR…NEINKACMPF (79 aa)) are funnel. The bridging helix stretch occupies residues 960–1001 (KPPEFFFHCMAGREGLVDTAVKTSRSGYLQRCIIKHLEGLVV). Residues 1060–1155 (ADPKKALHHF…SLSVWRPDIY (96 aa)) form a mediates the interaction with TOP2A region. The tract at residues 1207–1248 (PGEAVGLLAAQSIGEPSTQMTLNTFHFAGRGEMNVTLGIPRL) is trigger loop. Arg1249 provides a ligand contact to DNA. A disordered region spans residues 1365–1498 (RNVNTRRATQ…SQEPQGPEAM (134 aa)). The span at 1373–1390 (TQRDLDNAGELGRSRGEQ) shows a compositional bias: basic and acidic residues. Ser1386 bears the Phosphoserine mark. 2 stretches are compositionally biased toward acidic residues: residues 1391–1412 (EGDE…DADA) and 1422–1446 (EEEV…EDMQ). Residues 1447-1461 (EERNPHREGARKTQE) are compositionally biased toward basic and acidic residues. Acidic residues predominate over residues 1462-1474 (QDEEVGLGTEEDP).

Belongs to the RNA polymerase beta' chain family. In terms of assembly, component of the RNA polymerase I (Pol I) complex consisting of 13 subunits: a ten-subunit catalytic core composed of POLR1A/RPA1, POLR1B/RPA2, POLR1C/RPAC1, POLR1D/RPAC2, POLR1H/RPA12, POLR2E/RPABC1, POLR2F/RPABC2, POLR2H/RPABC3, POLR2K/RPABC4 and POLR2L/RPABC5; a mobile stalk subunit POLR1F/RPA43 protruding from the core and additional subunits homologous to general transcription factors POLR1E/RPA49 and POLR1G/RPA34. Part of Pol I pre-initiation complex (PIC), in which Pol I core assembles with RRN3 and promoter-bound UTBF and SL1/TIF-IB complex. Interacts (via dock II domain) with TOP2A; this interaction may assist Pol I transcription initiation by releasing supercoils occurring during DNA unwinding. Interacts with CAVIN1; this interaction induces the dissociation of Pol I complex paused at rDNA terminator sequences. Interacts with MYO1C. Interacts with ERBB2. Interacts with DDX11. Interacts with RECQL5. It depends on Mg(2+) as a cofactor.

The protein resides in the nucleus. The protein localises to the nucleolus. It localises to the chromosome. The enzyme catalyses RNA(n) + a ribonucleoside 5'-triphosphate = RNA(n+1) + diphosphate. Catalytic core component of RNA polymerase I (Pol I), a DNA-dependent RNA polymerase which synthesizes ribosomal RNA precursors using the four ribonucleoside triphosphates as substrates. Transcribes 47S pre-rRNAs from multicopy rRNA gene clusters, giving rise to 5.8S, 18S and 28S ribosomal RNAs. Pol I-mediated transcription cycle proceeds through transcription initiation, transcription elongation and transcription termination stages. During transcription initiation, Pol I pre-initiation complex (PIC) is recruited by the selectivity factor 1 (SL1/TIF-IB) complex bound to the core promoter that precedes an rDNA repeat unit. The PIC assembly bends the promoter favoring the formation of the transcription bubble and promoter escape. Once the polymerase has escaped from the promoter it enters the elongation phase during which RNA is actively polymerized, based on complementarity with the template DNA strand. Highly processive, assembles in structures referred to as 'Miller trees' where many elongating Pol I complexes queue and transcribe the same rDNA coding regions. At terminator sequences downstream of the rDNA gene, PTRF interacts with Pol I and halts Pol I transcription leading to the release of the RNA transcript and polymerase from the DNA. Forms Pol I active center together with the second largest subunit POLR1B/RPA2. Appends one nucleotide at a time to the 3' end of the nascent RNA, with POLR1A/RPA1 contributing a Mg(2+)-coordinating DxDGD motif, and POLR1B/RPA2 participating in the coordination of a second Mg(2+) ion and providing lysine residues believed to facilitate Watson-Crick base pairing between the incoming nucleotide and the template base. Typically, Mg(2+) ions direct a 5' nucleoside triphosphate to form a phosphodiester bond with the 3' hydroxyl of the preceding nucleotide of the nascent RNA, with the elimination of pyrophosphate. Has proofreading activity: Pauses and backtracks to allow the cleavage of a missincorporated nucleotide via POLR1H/RPA12. High Pol I processivity is associated with decreased transcription fidelity. This is DNA-directed RNA polymerase I subunit RPA1 from Homo sapiens (Human).